The sequence spans 361 residues: Chorismate synthase (361 aa).

Over residues 38–49 (EKDMQHDLDRRR) the composition is skewed to basic and acidic residues. A disordered region spans residues 38–58 (EKDMQHDLDRRRPGTSKYTTQ). Arg48 provides a ligand contact to NADP(+). FMN contacts are provided by residues 125 to 127 (RSS), 238 to 239 (NA), Gly278, 293 to 297 (KPTSS), and Arg319.

The protein belongs to the chorismate synthase family. Homotetramer. Requires FMNH2 as cofactor.

It carries out the reaction 5-O-(1-carboxyvinyl)-3-phosphoshikimate = chorismate + phosphate. The protein operates within metabolic intermediate biosynthesis; chorismate biosynthesis; chorismate from D-erythrose 4-phosphate and phosphoenolpyruvate: step 7/7. Functionally, catalyzes the anti-1,4-elimination of the C-3 phosphate and the C-6 proR hydrogen from 5-enolpyruvylshikimate-3-phosphate (EPSP) to yield chorismate, which is the branch point compound that serves as the starting substrate for the three terminal pathways of aromatic amino acid biosynthesis. This reaction introduces a second double bond into the aromatic ring system. The sequence is that of Chorismate synthase from Photobacterium profundum (strain SS9).